The primary structure comprises 177 residues: Small ribosomal subunit protein uS5 (177 aa).

Positions 14–77 constitute an S5 DRBM domain; that stretch reads LQEKLITVNR…EKARHNMIDI (64 aa).

It belongs to the universal ribosomal protein uS5 family. Part of the 30S ribosomal subunit. Contacts proteins S4 and S8.

In terms of biological role, with S4 and S12 plays an important role in translational accuracy. Located at the back of the 30S subunit body where it stabilizes the conformation of the head with respect to the body. The protein is Small ribosomal subunit protein uS5 of Blochmanniella floridana.